Reading from the N-terminus, the 243-residue chain is Phosphoribosylaminoimidazole-succinocarboxamide synthase (243 aa).

It belongs to the SAICAR synthetase family.

The catalysed reaction is 5-amino-1-(5-phospho-D-ribosyl)imidazole-4-carboxylate + L-aspartate + ATP = (2S)-2-[5-amino-1-(5-phospho-beta-D-ribosyl)imidazole-4-carboxamido]succinate + ADP + phosphate + 2 H(+). Its pathway is purine metabolism; IMP biosynthesis via de novo pathway; 5-amino-1-(5-phospho-D-ribosyl)imidazole-4-carboxamide from 5-amino-1-(5-phospho-D-ribosyl)imidazole-4-carboxylate: step 1/2. The polypeptide is Phosphoribosylaminoimidazole-succinocarboxamide synthase (Prochlorococcus marinus (strain MIT 9211)).